The primary structure comprises 185 residues: Signal peptidase complex subunit 3 (185 aa).

Residues 1–16 (MHTSIQRIQQTFSQAS) are Cytoplasmic-facing. The helical; Signal-anchor for type II membrane protein transmembrane segment at 17-37 (TVLSIIAAIVFVVSYIQLVVA) threads the bilayer. Topologically, residues 38-185 (NVWSLPEANF…KGSIKFPQLV (148 aa)) are lumenal. Asn151 carries N-linked (GlcNAc...) asparagine glycosylation.

Belongs to the SPCS3 family. In terms of assembly, component of the signal peptidase complex (SPC) composed of a catalytic subunit SEC11 and three accessory subunits SPC1, SPC2 and SPC3. The complex induces a local thinning of the ER membrane which is used to measure the length of the signal peptide (SP) h-region of protein substrates. This ensures the selectivity of the complex towards h-regions shorter than 18-20 amino acids. SPC associates with the translocon complex.

It localises to the endoplasmic reticulum membrane. In terms of biological role, essential component of the signal peptidase complex (SPC) which catalyzes the cleavage of N-terminal signal sequences from nascent proteins as they are translocated into the lumen of the endoplasmic reticulum. Essential for the SPC catalytic activity, possibly by stabilizing and positioning the active center of the complex close to the lumenal surface. Essential for viability. This chain is Signal peptidase complex subunit 3 (SPC3), found in Yarrowia lipolytica (strain CLIB 122 / E 150) (Yeast).